Consider the following 254-residue polypeptide: Triosephosphate isomerase (254 aa).

Substrate is bound at residue 9–11 (NWK). The active-site Electrophile is the histidine 98. Glutamate 170 functions as the Proton acceptor in the catalytic mechanism. Residues glycine 176, serine 215, and 236–237 (GG) each bind substrate.

Belongs to the triosephosphate isomerase family. Homodimer.

It localises to the cytoplasm. The enzyme catalyses D-glyceraldehyde 3-phosphate = dihydroxyacetone phosphate. The protein operates within carbohydrate biosynthesis; gluconeogenesis. Its pathway is carbohydrate degradation; glycolysis; D-glyceraldehyde 3-phosphate from glycerone phosphate: step 1/1. Involved in the gluconeogenesis. Catalyzes stereospecifically the conversion of dihydroxyacetone phosphate (DHAP) to D-glyceraldehyde-3-phosphate (G3P). The sequence is that of Triosephosphate isomerase from Buchnera aphidicola subsp. Cinara cedri (strain Cc).